We begin with the raw amino-acid sequence, 285 residues long: Ribosomal RNA small subunit methyltransferase H (285 aa).

S-adenosyl-L-methionine contacts are provided by residues 34-36 (AGH), D51, F75, D96, and H103. The interval 259–285 (LVPSEKEAAQNPRARSAKLRAAEKEAP) is disordered.

The protein belongs to the methyltransferase superfamily. RsmH family.

Its subcellular location is the cytoplasm. It catalyses the reaction cytidine(1402) in 16S rRNA + S-adenosyl-L-methionine = N(4)-methylcytidine(1402) in 16S rRNA + S-adenosyl-L-homocysteine + H(+). Functionally, specifically methylates the N4 position of cytidine in position 1402 (C1402) of 16S rRNA. The chain is Ribosomal RNA small subunit methyltransferase H from Thermus thermophilus (strain ATCC 27634 / DSM 579 / HB8).